Here is a 274-residue protein sequence, read N- to C-terminus: uncharacterized protein (274 aa).

This is an uncharacterized protein from Caenorhabditis elegans.